We begin with the raw amino-acid sequence, 450 residues long: Benzene 1,2-dioxygenase subunit alpha (450 aa).

In terms of domain architecture, Rieske spans 56–163; that stretch reads LLGHETHIRK…VETYKGLIFA (108 aa). Cys-96, His-98, Cys-116, and His-119 together coordinate [2Fe-2S] cluster. The Fe cation site is built by His-222 and His-228.

The protein belongs to the bacterial ring-hydroxylating dioxygenase alpha subunit family. In terms of assembly, this dioxygenase system consists of four proteins: the two subunits of the hydroxylase component (BedC1 and BedC2), a ferredoxin (BedB) and a ferredoxin reductase (BedA). It depends on [2Fe-2S] cluster as a cofactor. Requires Fe cation as cofactor.

It carries out the reaction benzene + NADH + O2 + H(+) = cis-1,2-dihydrobenzene-1,2-diol + NAD(+). It functions in the pathway aromatic compound metabolism; benzene degradation; catechol from benzene: step 1/2. This chain is Benzene 1,2-dioxygenase subunit alpha (bedC1), found in Pseudomonas putida (Arthrobacter siderocapsulatus).